A 390-amino-acid chain; its full sequence is Coiled-coil domain-containing protein 85C (390 aa).

Coiled coils occupy residues 26–86 (KEEL…RELC) and 116–146 (KEVG…KEII). Residues 153–237 (RNGPGSRSSI…RSIPNGLNDS (85 aa)) are disordered. Over residues 157–172 (GSRSSIDSQNSLTNLN) the composition is skewed to polar residues. The segment covering 182-194 (DGSSTSSTGSAGS) has biased composition (low complexity).

The protein belongs to the CCDC85 family.

The protein localises to the cell junction. It is found in the tight junction. Its subcellular location is the adherens junction. May play a role in cell-cell adhesion and epithelium development. May play an important role in cortical development, especially in the maintenance of radial glia. The sequence is that of Coiled-coil domain-containing protein 85C (ccdc85c) from Xenopus laevis (African clawed frog).